Consider the following 66-residue polypeptide: LYR motif-containing protein PHYPADRAFT_186863 (66 aa).

This sequence belongs to the complex I LYR family. LYRM9 subfamily.

In Physcomitrium patens (Spreading-leaved earth moss), this protein is LYR motif-containing protein PHYPADRAFT_186863.